The sequence spans 136 residues: Endonuclease II (136 aa).

Residues 32–131 form the GIY-YIG domain; the sequence is KYNVIYAIAI…IKLFNPPWNI (100 aa).

As to quaternary structure, homotetramer. Mg(2+) is required as a cofactor.

It carries out the reaction Endonucleolytic nicking and cleavage of cytosine-containing double-stranded DNA.. In terms of biological role, contributes to the degradation of host DNA, permitting the scavenging of host-derived nucleotides for phage DNA synthesis. Sequence-specific endonuclease. Catalyzes nicking of the bottom strand of double-stranded DNA between the first and second base pair to the right of a top-strand CCGC motif. Does not cleave native phage DNA, which contains 5-hydroxymethylcytosine instead of cytosine. The protein is Endonuclease II (denA) of Escherichia coli (Bacteriophage T4).